The chain runs to 237 residues: N-alpha-acetyltransferase 40 (237 aa).

A lipid anchor (N-myristoyl glycine) is attached at Gly2. The N-acetyltransferase domain occupies 63–216; it reads SGLEPATVDW…EDCSYEILSR (154 aa). Residues Tyr85, 127 to 129, and Tyr138 contribute to the substrate site; that span reads DVE. Acetyl-CoA-binding positions include 140–142 and 148–153; these read VQL and RKGLGK. Thr174 contacts substrate. Residue Asn179 participates in acetyl-CoA binding. Residues Ser197 and Tyr211 each contribute to the substrate site.

The protein belongs to the acetyltransferase family. NAA40 subfamily. As to expression, widely expressed; with the highest expression level in liver and the lowest expression in brain (at protein level).

The protein localises to the cytoplasm. The protein resides in the nucleus. The catalysed reaction is N-terminal L-seryl-[histone H4] + acetyl-CoA = N-terminal N(alpha)-acetyl-L-seryl-[histone H4] + CoA + H(+). The enzyme catalyses N-terminal L-seryl-[histone H2A] + acetyl-CoA = N-terminal N(alpha)-acetyl-L-seryl-[histone H2A] + CoA + H(+). Its function is as follows. N-alpha-acetyltransferase that specifically mediates the acetylation of the N-terminal residues of histones H4 and H2A. In contrast to other N-alpha-acetyltransferase, has a very specific selectivity for histones H4 and H2A N-terminus and specifically recognizes the 'Ser-Gly-Arg-Gly sequence'. Acts as a negative regulator of apoptosis. May play a role in hepatic lipid metabolism. The polypeptide is N-alpha-acetyltransferase 40 (Homo sapiens (Human)).